The primary structure comprises 143 residues: MFLGTYTPRLDEKSRLILPAKFREELAEGLVLTRGQERCIYVFSAREFERVHEQMRSAPLSSRQARDYIRVFLSGASDEVPDKQGRVTVPAPLRQYAGLDRDVTVIGAGTRVEIWDSESWNTYLAEQEAAFSETDEDVLPGVF.

2 SpoVT-AbrB domains span residues 5–47 (TYTP…SARE) and 76–119 (ASDE…DSES).

Belongs to the MraZ family. In terms of assembly, forms oligomers.

The protein resides in the cytoplasm. Its subcellular location is the nucleoid. In Micrococcus luteus (strain ATCC 4698 / DSM 20030 / JCM 1464 / CCM 169 / CCUG 5858 / IAM 1056 / NBRC 3333 / NCIMB 9278 / NCTC 2665 / VKM Ac-2230) (Micrococcus lysodeikticus), this protein is Transcriptional regulator MraZ.